Here is a 489-residue protein sequence, read N- to C-terminus: CUGBP Elav-like family member 1-B (489 aa).

RRM domains are found at residues 16 to 99 (IKMF…PADS), 108 to 188 (RKLF…FADT), and 404 to 482 (ANLF…LKRS).

This sequence belongs to the CELF/BRUNOL family. As to quaternary structure, oligomer. Oligomerization is required for RNA-binding and EDEN-dependent deadenylation. Phosphorylated during oocyte maturation and dephosphorylated following egg activation. Dephosphorylation is calcium dependent and correlates with the increase in the activity of EDEN-dependent deadenylation.

It localises to the nucleus. The protein localises to the cytoplasm. In terms of biological role, RNA-binding protein implicated in the regulation of several post-transcriptional events. May be involved in pre-mRNA alternative splicing, mRNA translation activation and stability. Mediates the rapid and sequence-specific cytoplasmic deadenylation of EDEN-containing maternal mRNAs following fertilization. Binds to AU-rich sequences (AREs) of jun mRNA. Binds to the embryonic deadenylation element (EDEN) motif localized in the 3'-UTR of maternal mRNAs. Binds to RNA containing several repeats of the consensus sequence 5'-UGU-3'. EDEN-dependent deadenylation is enhanced by the presence of an additional cis element composed of three AUU repeats. In Xenopus laevis (African clawed frog), this protein is CUGBP Elav-like family member 1-B (cugbp1-b).